Reading from the N-terminus, the 704-residue chain is DNA ligase (704 aa).

NAD(+) is bound by residues 43–47, 92–93, and Glu-124; these read DADYD and SL. The N6-AMP-lysine intermediate role is filled by Lys-126. Residues Arg-147, Glu-182, Lys-298, and Lys-322 each contribute to the NAD(+) site. Residues Cys-427, Cys-430, Cys-445, and Cys-451 each coordinate Zn(2+). Residues 625–704 form the BRCT domain; the sequence is PVESPIAGKI…DAWLRLIGDA (80 aa).

The protein belongs to the NAD-dependent DNA ligase family. LigA subfamily. Mg(2+) is required as a cofactor. Requires Mn(2+) as cofactor.

It catalyses the reaction NAD(+) + (deoxyribonucleotide)n-3'-hydroxyl + 5'-phospho-(deoxyribonucleotide)m = (deoxyribonucleotide)n+m + AMP + beta-nicotinamide D-nucleotide.. Its function is as follows. DNA ligase that catalyzes the formation of phosphodiester linkages between 5'-phosphoryl and 3'-hydroxyl groups in double-stranded DNA using NAD as a coenzyme and as the energy source for the reaction. It is essential for DNA replication and repair of damaged DNA. The protein is DNA ligase of Cereibacter sphaeroides (strain ATCC 17025 / ATH 2.4.3) (Rhodobacter sphaeroides).